The following is a 177-amino-acid chain: Inorganic pyrophosphatase (177 aa).

Substrate-binding residues include K30, R44, and Y56. Mg(2+) is bound by residues D66, D71, and D103. Position 142 (Y142) interacts with substrate.

It belongs to the PPase family. As to quaternary structure, homohexamer. Mg(2+) serves as cofactor.

It localises to the cytoplasm. The enzyme catalyses diphosphate + H2O = 2 phosphate + H(+). In terms of biological role, catalyzes the hydrolysis of inorganic pyrophosphate (PPi) forming two phosphate ions. This is Inorganic pyrophosphatase from Agrobacterium fabrum (strain C58 / ATCC 33970) (Agrobacterium tumefaciens (strain C58)).